We begin with the raw amino-acid sequence, 817 residues long: Tax1-binding protein 1 homolog (817 aa).

Residues Ser-124 and Ser-138 each carry the phosphoserine modification. A coiled-coil region spans residues 144 to 628; it reads TTKAGLLELK…ENQAERKLEG (485 aa). An oligomerization region spans residues 320 to 420; that stretch reads EEISRLQFSL…ELKLSAVNKD (101 aa). A compositionally biased stretch (basic and acidic residues) spans 609 to 627; the sequence is SREKEHKRSVENQAERKLE. The tract at residues 609-685 is disordered; it reads SREKEHKRSV…ADGAFYPDEI (77 aa). Ser-617 carries the phosphoserine; by IKKA modification. Positions 628 to 643 are enriched in polar residues; the sequence is GQNSQSPHQISQCLKT. Phosphoserine is present on Ser-633. Position 694 is a phosphoserine; by IKKA (Ser-694). The tract at residues 704 to 742 is disordered; it reads SQPARNLSRPDGLEDPEDSKEDEKVPTAPDPPSQHLRGH. UBZ1-type zinc fingers lie at residues 755–781 and 782–808; these read QKKCPLCELMFPPNYDQSKFEEHVESH and WKVCPMCSEQFPPDYDQQVFERHVQTH. Cys-758, Cys-761, His-777, His-781, Cys-785, Cys-788, His-804, and His-808 together coordinate Zn(2+).

Homooligomer. Interacts with TNFAIP3. Interacts with STARD13. Interacts with MYO6. Interacts with TOM1; the interaction is indirect and is mediated by MYO6, which acts as a bridge between TOM1 and TAX1BP1. Interacts with MAVS; this interaction induces MAVS polyubiquitination. Interacts with TNIP1. Interacts with TRAF6; this interaction mediates deubiquitination of TRAF6 and inhibition of NF-kappa-B activation. Interacts with RIPK1; this interaction negatively regulates RIPK1 ubiquitination. Interacts with NBR1. Interacts with TBK1. Interacts with RB1CC1. Interacts with SQSTM1. Interacts with AZI2. Phosphorylated in the C-terminal region by CHUK/IKKA leading to NF-kappa-B signaling down-regulation.

Its subcellular location is the cytoplasm. It localises to the mitochondrion. It is found in the preautophagosomal structure. The protein resides in the cytoplasmic vesicle. The protein localises to the autophagosome. Functionally, ubiquitin-binding adapter that participates in inflammatory, antiviral and innate immune processes as well as selective autophagy regulation. Plays a key role in the negative regulation of NF-kappa-B and IRF3 signalings by acting as an adapter for the ubiquitin-editing enzyme A20/TNFAIP3 to bind and inactivate its substrates. Disrupts the interactions between the E3 ubiquitin ligase TRAF3 and TBK1/IKBKE to attenuate 'Lys63'-linked polyubiquitination of TBK1 and thereby IFN-beta production. Also recruits A20/TNFAIP3 to ubiquitinated signaling proteins TRAF6 and RIPK1, leading to their deubiquitination and disruption of IL-1 and TNF-induced NF-kappa-B signaling pathways. Inhibits virus-induced apoptosis by inducing the 'Lys-48'-linked polyubiquitination and degradation of MAVS via recruitment of the E3 ligase ITCH, thereby attenuating MAVS-mediated apoptosis signaling. As a macroautophagy/autophagy receptor, facilitates the xenophagic clearance of pathogenic bacteria such as Salmonella typhimurium and Mycobacterium tuberculosis. Upon NBR1 recruitment to the SQSTM1-ubiquitin condensates, acts as the major recruiter of RB1CC1 to these ubiquitin condensates to promote their autophagic degradation. The chain is Tax1-binding protein 1 homolog (TAX1BP1) from Bos taurus (Bovine).